The chain runs to 121 residues: uncharacterized protein (121 aa).

Residues 12-24 (EEGGASAAAPDAS) are compositionally biased toward low complexity. Disordered regions lie at residues 12–63 (EEGG…RLEP) and 101–121 (KKLA…SPVV). Residues 26 to 35 (KSKKGARPCF) are compositionally biased toward basic residues. Polar residues predominate over residues 40–49 (QAGSCMTGRQ). Residues 112–121 (GSQKERSPVV) show a composition bias toward basic and acidic residues.

This is an uncharacterized protein from Homo sapiens (Human).